Consider the following 1588-residue polypeptide: Pentafunctional AROM polypeptide (1588 aa).

The interval 1–392 is 3-dehydroquinate synthase; sequence MVQLAKVPIL…YGDSAQFVSD (392 aa). NAD(+) contacts are provided by residues 43 to 45, 78 to 81, 109 to 111, and Asp-114; these read DTN, ETSK, and GGV. Arg-125 is a 7-phospho-2-dehydro-3-deoxy-D-arabino-heptonate binding site. 134–135 contributes to the NAD(+) binding site; it reads TS. Asp-141 and Lys-147 together coordinate 7-phospho-2-dehydro-3-deoxy-D-arabino-heptonate. Position 156 (Lys-156) interacts with NAD(+). 7-phospho-2-dehydro-3-deoxy-D-arabino-heptonate is bound at residue Asn-157. Residues 174–177 and Asn-185 contribute to the NAD(+) site; that span reads WLET. Glu-189 serves as a coordination point for Zn(2+). Residues 189–192 and Lys-258 contribute to the 7-phospho-2-dehydro-3-deoxy-D-arabino-heptonate site; that span reads EVIK. The active-site Proton acceptor; for 3-dehydroquinate synthase activity is Glu-268. 7-phospho-2-dehydro-3-deoxy-D-arabino-heptonate contacts are provided by residues 272–276 and His-279; that span reads RNLLN. Residue His-279 participates in Zn(2+) binding. Catalysis depends on His-283, which acts as the Proton acceptor; for 3-dehydroquinate synthase activity. His-295 and Lys-364 together coordinate 7-phospho-2-dehydro-3-deoxy-D-arabino-heptonate. His-295 is a binding site for Zn(2+). Residues 405-871 are EPSP synthase; that stretch reads VYPFKDIPAD…WDVLHSELGA (467 aa). Cys-853 acts as the For EPSP synthase activity in catalysis. Residues 890-1080 form a shikimate kinase region; the sequence is SVVIIGMRAA…IPSGRSAFVC (191 aa). 895–902 contacts ATP; it reads GMRAAGKT. The segment at 1081–1293 is 3-dehydroquinase; that stretch reads LTFDDLTEQT…AAPGQLTVAQ (213 aa). The active-site Proton acceptor; for 3-dehydroquinate dehydratase activity is His-1198. Lys-1227 (schiff-base intermediate with substrate; for 3-dehydroquinate dehydratase activity) is an active-site residue. The tract at residues 1306-1588 is shikimate dehydrogenase; it reads PKELFVVGKP…KAIFDAVTKE (283 aa).

The protein in the N-terminal section; belongs to the sugar phosphate cyclases superfamily. Dehydroquinate synthase family. This sequence in the 2nd section; belongs to the EPSP synthase family. In the 3rd section; belongs to the shikimate kinase family. It in the 4th section; belongs to the type-I 3-dehydroquinase family. The protein in the C-terminal section; belongs to the shikimate dehydrogenase family. As to quaternary structure, homodimer. Requires Zn(2+) as cofactor.

It is found in the cytoplasm. The catalysed reaction is 7-phospho-2-dehydro-3-deoxy-D-arabino-heptonate = 3-dehydroquinate + phosphate. The enzyme catalyses 3-dehydroquinate = 3-dehydroshikimate + H2O. It catalyses the reaction shikimate + NADP(+) = 3-dehydroshikimate + NADPH + H(+). It carries out the reaction shikimate + ATP = 3-phosphoshikimate + ADP + H(+). The catalysed reaction is 3-phosphoshikimate + phosphoenolpyruvate = 5-O-(1-carboxyvinyl)-3-phosphoshikimate + phosphate. It participates in metabolic intermediate biosynthesis; chorismate biosynthesis; chorismate from D-erythrose 4-phosphate and phosphoenolpyruvate: step 2/7. It functions in the pathway metabolic intermediate biosynthesis; chorismate biosynthesis; chorismate from D-erythrose 4-phosphate and phosphoenolpyruvate: step 3/7. The protein operates within metabolic intermediate biosynthesis; chorismate biosynthesis; chorismate from D-erythrose 4-phosphate and phosphoenolpyruvate: step 4/7. Its pathway is metabolic intermediate biosynthesis; chorismate biosynthesis; chorismate from D-erythrose 4-phosphate and phosphoenolpyruvate: step 5/7. It participates in metabolic intermediate biosynthesis; chorismate biosynthesis; chorismate from D-erythrose 4-phosphate and phosphoenolpyruvate: step 6/7. Functionally, the AROM polypeptide catalyzes 5 consecutive enzymatic reactions in prechorismate polyaromatic amino acid biosynthesis. The protein is Pentafunctional AROM polypeptide of Saccharomyces cerevisiae (strain RM11-1a) (Baker's yeast).